The primary structure comprises 137 residues: Glutamate mutase sigma subunit (137 aa).

The 135-residue stretch at Lys-3–Glu-137 folds into the B12-binding domain. Residues Ser-13–Ala-17, His-16, Ser-61–Leu-63, and Asn-93–Gly-97 contribute to the adenosylcob(III)alamin site.

It belongs to the methylaspartate mutase GlmS subunit family. As to quaternary structure, heterotetramer composed of 2 epsilon subunits (GlmE) and 2 sigma subunits (GlmS). GlmE exists as a homodimer and GlmS as a monomer. Requires adenosylcob(III)alamin as cofactor.

It catalyses the reaction (2S,3S)-3-methyl-L-aspartate = L-glutamate. It functions in the pathway amino-acid degradation; L-glutamate degradation via mesaconate pathway; acetate and pyruvate from L-glutamate: step 1/4. Its activity is regulated as follows. Competitively inhibited by (2S,4S)-4-fluoroglutamate, 2-methyleneglutarate, (2R,3RS)-3-fluoroglutamate and (S)-3-methylitaconate. Catalyzes the carbon skeleton rearrangement of L-glutamate to L-threo-3-methylaspartate ((2S,3S)-3-methylaspartate). The chain is Glutamate mutase sigma subunit from Clostridium cochlearium.